Here is a 391-residue protein sequence, read N- to C-terminus: Small ribosomal subunit protein mS29 (391 aa).

Residues 1-17 (MLTGITRLFSRVQKLDP) constitute a mitochondrion transit peptide. The segment at 30–59 (NSQVPAERPRTVSRTSDSDPAKHGEQHEGQ) is disordered. Basic and acidic residues predominate over residues 45-59 (SDSDPAKHGEQHEGQ). An N6-acetyllysine mark is found at Lys-168 and Lys-200.

The protein belongs to the mitochondrion-specific ribosomal protein mS29 family. As to quaternary structure, component of the mitochondrial ribosome small subunit (28S) which comprises a 12S rRNA and about 30 distinct proteins. Interacts with DELE1. Interacts with NOA1.

It localises to the mitochondrion. The enzyme catalyses GTP + H2O = GDP + phosphate + H(+). Its function is as follows. As a component of the mitochondrial small ribosomal subunit, it plays a role in the translation of mitochondrial mRNAs. Involved in mediating interferon-gamma-induced cell death. Displays GTPase activity in vitro. This is Small ribosomal subunit protein mS29 from Mus musculus (Mouse).